Reading from the N-terminus, the 186-residue chain is MKIGVLALQGAVREHIRHIELSGHEGIAVKKVEQLEEIEGLILPGGESTTLRRLMNLYGFKEALQNSTLPMFGTCAGLIVLAQDIVGEEGYLNKLNITVQRNSFGRQVDSFETELDIKGIATDIEGVFIRAPHIEKVGQGVDILCKVNEKIVAVQQGKYLGVSFHPELTDDYRVTDYFINHIVKKA.

46 to 48 (GES) lines the L-glutamine pocket. Residue C75 is the Nucleophile of the active site. Residues R101 and 129-130 (IR) each bind L-glutamine. Catalysis depends on charge relay system residues H165 and E167.

The protein belongs to the glutaminase PdxT/SNO family. As to quaternary structure, in the presence of PdxS, forms a dodecamer of heterodimers. Only shows activity in the heterodimer.

The catalysed reaction is aldehydo-D-ribose 5-phosphate + D-glyceraldehyde 3-phosphate + L-glutamine = pyridoxal 5'-phosphate + L-glutamate + phosphate + 3 H2O + H(+). It carries out the reaction L-glutamine + H2O = L-glutamate + NH4(+). Its pathway is cofactor biosynthesis; pyridoxal 5'-phosphate biosynthesis. Catalyzes the hydrolysis of glutamine to glutamate and ammonia as part of the biosynthesis of pyridoxal 5'-phosphate. The resulting ammonia molecule is channeled to the active site of PdxS. This chain is Pyridoxal 5'-phosphate synthase subunit PdxT, found in Staphylococcus aureus (strain Mu3 / ATCC 700698).